The sequence spans 223 residues: N-(5'-phosphoribosyl)anthranilate isomerase (223 aa).

Belongs to the TrpF family.

It catalyses the reaction N-(5-phospho-beta-D-ribosyl)anthranilate = 1-(2-carboxyphenylamino)-1-deoxy-D-ribulose 5-phosphate. It functions in the pathway amino-acid biosynthesis; L-tryptophan biosynthesis; L-tryptophan from chorismate: step 3/5. The chain is N-(5'-phosphoribosyl)anthranilate isomerase from Bradyrhizobium diazoefficiens (strain JCM 10833 / BCRC 13528 / IAM 13628 / NBRC 14792 / USDA 110).